A 303-amino-acid chain; its full sequence is Mycothiol acetyltransferase (303 aa).

N-acetyltransferase domains lie at 4–141 and 154–303; these read ITVR…RSLA and IVLR…ANGA. A 1D-myo-inositol 2-(L-cysteinylamino)-2-deoxy-alpha-D-glucopyranoside-binding site is contributed by Glu38. Position 80–82 (80–82) interacts with acetyl-CoA; sequence AAV. 1D-myo-inositol 2-(L-cysteinylamino)-2-deoxy-alpha-D-glucopyranoside contacts are provided by Glu181, Lys223, and Glu234. Acetyl-CoA-binding positions include 238–240 and 245–251; these read VGI and QGRGLGR. Tyr272 contacts 1D-myo-inositol 2-(L-cysteinylamino)-2-deoxy-alpha-D-glucopyranoside. An acetyl-CoA-binding site is contributed by 277-282; it reads NTAAVN.

It belongs to the acetyltransferase family. MshD subfamily. In terms of assembly, monomer.

It catalyses the reaction 1D-myo-inositol 2-(L-cysteinylamino)-2-deoxy-alpha-D-glucopyranoside + acetyl-CoA = mycothiol + CoA + H(+). Its function is as follows. Catalyzes the transfer of acetyl from acetyl-CoA to desacetylmycothiol (Cys-GlcN-Ins) to form mycothiol. This is Mycothiol acetyltransferase from Nocardia farcinica (strain IFM 10152).